A 76-amino-acid polypeptide reads, in one-letter code: Kappa-actitoxin-Avd4l (76 aa).

The first 19 residues, 1 to 19 (MNKALFLCLVVLCAAVVFA), serve as a signal peptide directing secretion. The propeptide occupies 20 to 31 (AEDLQKAKHAPF). 3 cysteine pairs are disulfide-bonded: cysteine 37–cysteine 72, cysteine 39–cysteine 65, and cysteine 55–cysteine 73.

Belongs to the sea anemone type 3 (BDS) potassium channel toxin family. As to expression, weakly expressed in the ectodermal tissue from the distal and proximal tentacles, body wall, and oral disk.

It is found in the secreted. It localises to the nematocyst. Functionally, blocks Kv3 voltage-gated potassium channels. Reduces blood pressure. This chain is Kappa-actitoxin-Avd4l, found in Anemonia viridis (Snakelocks anemone).